A 29-amino-acid chain; its full sequence is Cyclotide mden-A (29 aa).

A cross-link (cyclopeptide (Gly-Asn)) is located at residues 1 to 29; the sequence is GIPTCGETCTLGTCNTPGCTCSWPICTKN. Disulfide bonds link C5–C19, C9–C21, and C14–C26.

It belongs to the cyclotide family. Moebius subfamily. This is a cyclic peptide.

In terms of biological role, probably participates in a plant defense mechanism. In Melicytus dentatus (Tree violet), this protein is Cyclotide mden-A.